A 1912-amino-acid polypeptide reads, in one-letter code: Receptor-type tyrosine-protein phosphatase delta (1912 aa).

Positions 1–20 (MVPVARPLSLLLTFFLCACA) are cleaved as a signal peptide. The Extracellular segment spans residues 21-1266 (ETPPRFTRTP…PQPITDEEEG (1246 aa)). Ig-like C2-type domains lie at 24–114 (PRFT…TRLT) and 126–224 (PTID…ANLY). 2 cysteine pairs are disulfide-bonded: Cys-45–Cys-98 and Cys-147–Cys-207. Positions 181–189 (ESIGGTPIR) are mini-exon peptide A9; sufficient for interaction with IL1RAPL1. Positions 227–230 (ELRE) are mini-exon peptide B; required for interaction with SLITRK2 and in the function in pre-synaptic differentiation; Acts as an adjustable linker to control relative positions and orientations of the PTPRD second and third immunoglobilin domains for their simultaneous interactions with the first immunoglobilin domain of IL1RAPL1 and IL1RAP; Modulates affinity for IL1RAPL1 and IL1RAP. One can recognise an Ig-like C2-type 3 domain in the interval 236-318 (PRFSIPPTNH…GVIEAIAQIT (83 aa)). Asn-254 and Asn-299 each carry an N-linked (GlcNAc...) asparagine glycan. A disulfide bridge links Cys-257 with Cys-302. 8 consecutive Fibronectin type-III domains span residues 325–415 (PPGT…TSEQ), 420–516 (APRD…TGVP), 518–607 (QPLN…TMQS), 612–709 (PPQD…TDED), 714–822 (PPRK…TTGA), 823–916 (VPGK…VPEE), 921–1016 (FPQN…TLPV), and 1020–1106 (FAKN…TAPD). N-linked (GlcNAc...) asparagine glycans are attached at residues Asn-724 and Asn-832. The chain crosses the membrane as a helical span at residues 1267 to 1287 (LIWVVGPVLAVVFIICIVIAI). Topologically, residues 1288 to 1912 (LLYKRKRAES…YLGSFDHYAT (625 aa)) are cytoplasmic. The tract at residues 1298–1319 (ESRKSSLPNSKEVPSHHPTDPV) is disordered. Residues 1310 to 1319 (VPSHHPTDPV) are compositionally biased toward basic and acidic residues. Tyrosine-protein phosphatase domains lie at 1357–1612 (FSQE…LLEA) and 1644–1903 (MELE…ALEY). Substrate is bound by residues Asp-1521, 1553–1559 (CSAGVGR), and Gln-1597. Residue Cys-1553 is the Phosphocysteine intermediate of the active site. Cys-1844 (phosphocysteine intermediate) is an active-site residue.

The protein belongs to the protein-tyrosine phosphatase family. Receptor class 2A subfamily. Interacts with PPFIA1, PPFIA2 and PPFIA3. Interacts (via extracellular domain) with SLITRK4 (via LRR 1 and 2 repeats). Interacts with SLITRK2; induces presynaptic differentiation. Interacts (via the second immunoglobilin domain) with IL1RAPL1 (via the first immunoglobilin domain); induces pre- and postsynaptic differentiation of neurons and synapse formation. Isoform G, isoform H, isoform I, isoform J, and isoform K do not interact with IL1RAPL1. Interacts (via the third immunoglobilin domain) with IL1RAP (via the first immunoglobilin domain); induces pre- and postsynaptic differentiation of neurons. A cleavage occurs, separating the extracellular domain from the transmembrane segment. This process called 'ectodomain shedding' is thought to be involved in receptor desensitization, signal transduction and/or membrane localization. In terms of tissue distribution, brain, kidney, heart, and some B-cell lines.

It is found in the membrane. It catalyses the reaction O-phospho-L-tyrosyl-[protein] + H2O = L-tyrosyl-[protein] + phosphate. Functionally, can bidirectionally induce pre- and post-synaptic differentiation of neurons by mediating interaction with IL1RAP and IL1RAPL1 trans-synaptically. Involved in pre-synaptic differentiation through interaction with SLITRK2. In Mus musculus (Mouse), this protein is Receptor-type tyrosine-protein phosphatase delta (Ptprd).